The primary structure comprises 104 residues: Large ribosomal subunit protein uL24 (104 aa).

It belongs to the universal ribosomal protein uL24 family. In terms of assembly, part of the 50S ribosomal subunit.

Functionally, one of two assembly initiator proteins, it binds directly to the 5'-end of the 23S rRNA, where it nucleates assembly of the 50S subunit. In terms of biological role, one of the proteins that surrounds the polypeptide exit tunnel on the outside of the subunit. This chain is Large ribosomal subunit protein uL24, found in Photobacterium profundum (strain SS9).